Here is a 622-residue protein sequence, read N- to C-terminus: Low affinity potassium transport system protein Kup (622 aa).

A run of 12 helical transmembrane segments spans residues 12 to 32 (ITLA…LYTL), 49 to 69 (VFGF…IKYL), 103 to 123 (VIMG…TPAI), 137 to 157 (PQLD…LFMI), 165 to 185 (VGKL…VLGL), 213 to 233 (VSFI…ALYA), 247 to 267 (WFTV…ALLL), 276 to 296 (PFFL…AALA), 337 to 357 (IYIP…IVSF), 363 to 383 (LAAA…ILST), 396 to 416 (FVAL…SANL), and 419 to 439 (LLSG…IMTT).

This sequence belongs to the HAK/KUP transporter (TC 2.A.72) family.

The protein resides in the cell inner membrane. The catalysed reaction is K(+)(in) + H(+)(in) = K(+)(out) + H(+)(out). Its function is as follows. Responsible for the low-affinity transport of potassium into the cell. Likely operates as a K(+):H(+) symporter. This is Low affinity potassium transport system protein Kup from Salmonella gallinarum (strain 287/91 / NCTC 13346).